An 832-amino-acid chain; its full sequence is Cation/H(+) antiporter 21 (832 aa).

The next 12 membrane-spanning stretches (helical) occupy residues Ile-33–Tyr-55, Leu-61–Leu-81, Leu-99–Leu-119, Val-132–Leu-152, Ile-161–Ala-181, Cys-200–Phe-220, Ser-236–Phe-256, Ile-278–Phe-298, Phe-319–Gly-339, Val-352–Leu-372, Gly-379–Ala-399, and His-413–Tyr-433. Polar residues predominate over residues Arg-792–Pro-802. Residues Arg-792–Arg-832 are disordered.

Belongs to the monovalent cation:proton antiporter 2 (CPA2) transporter (TC 2.A.37) family. CHX (TC 2.A.37.4) subfamily. As to expression, specifically expressed in root endodermal cells. Expressed in seedlings, roots, leaves, flowers, flower buds and pollen.

It is found in the cell membrane. In terms of biological role, operates as a Na(+)/H(+) antiporter that plays a role in regulation of xylem Na(+) concentration and, consequently, Na(+) accumulation in the leaf. Required for pollen tube guidance, but not for normal pollen development. May also be involved in the development or function of the female gametophyte. The sequence is that of Cation/H(+) antiporter 21 (CHX21) from Arabidopsis thaliana (Mouse-ear cress).